A 236-amino-acid polypeptide reads, in one-letter code: 2,3,4,5-tetrahydropyridine-2,6-dicarboxylate N-acetyltransferase (236 aa).

Belongs to the transferase hexapeptide repeat family. DapH subfamily.

It catalyses the reaction (S)-2,3,4,5-tetrahydrodipicolinate + acetyl-CoA + H2O = L-2-acetamido-6-oxoheptanedioate + CoA. Its pathway is amino-acid biosynthesis; L-lysine biosynthesis via DAP pathway; LL-2,6-diaminopimelate from (S)-tetrahydrodipicolinate (acetylase route): step 1/3. Catalyzes the transfer of an acetyl group from acetyl-CoA to tetrahydrodipicolinate. This chain is 2,3,4,5-tetrahydropyridine-2,6-dicarboxylate N-acetyltransferase, found in Bacillus licheniformis (strain ATCC 14580 / DSM 13 / JCM 2505 / CCUG 7422 / NBRC 12200 / NCIMB 9375 / NCTC 10341 / NRRL NRS-1264 / Gibson 46).